An 86-amino-acid chain; its full sequence is Small ribosomal subunit protein bS20 (86 aa).

Residues 1–22 (MANIASARKRARQAEKNRQHNM) form a disordered region.

It belongs to the bacterial ribosomal protein bS20 family.

Its function is as follows. Binds directly to 16S ribosomal RNA. This Thioalkalivibrio sulfidiphilus (strain HL-EbGR7) protein is Small ribosomal subunit protein bS20.